Here is a 327-residue protein sequence, read N- to C-terminus: Tryptophan--tRNA ligase (327 aa).

Residues 9–11 and 17–18 each bind ATP; these read QPS and GN. Residues 10 to 18 carry the 'HIGH' region motif; it reads PSGTLTLGN. Residue aspartate 132 participates in L-tryptophan binding. ATP-binding positions include 144 to 146, isoleucine 183, and 192 to 196; these read GDD and KMSKS. The 'KMSKS' region motif lies at 192–196; that stretch reads KMSKS.

Belongs to the class-I aminoacyl-tRNA synthetase family. In terms of assembly, homodimer.

The protein localises to the cytoplasm. It catalyses the reaction tRNA(Trp) + L-tryptophan + ATP = L-tryptophyl-tRNA(Trp) + AMP + diphosphate + H(+). In terms of biological role, catalyzes the attachment of tryptophan to tRNA(Trp). This is Tryptophan--tRNA ligase from Oceanobacillus iheyensis (strain DSM 14371 / CIP 107618 / JCM 11309 / KCTC 3954 / HTE831).